Here is a 201-residue protein sequence, read N- to C-terminus: MSRYRGPRFKKIRRLGALPGLTRKRPRSGSDLRNQSRSGKRSQYRIRLEEKQKLRFHYGLTERQLLRYVRIAGKAKGSTGQVLLQLLEMRLDNILFRLGMASTIPGARQLVNHRHILVNGRIVDIPSYRCKPQDIITTRDEQRSRALIQNYMDSSPHEELAKHLSLYSSQYKGLVNQIIDIKWIGLKINELLVVEYYSRQT.

A disordered region spans residues 15 to 43 (LGALPGLTRKRPRSGSDLRNQSRSGKRSQ). The S4 RNA-binding domain occupies 89–150 (MRLDNILFRL…EQRSRALIQN (62 aa)).

Belongs to the universal ribosomal protein uS4 family. As to quaternary structure, part of the 30S ribosomal subunit. Contacts protein S5. The interaction surface between S4 and S5 is involved in control of translational fidelity.

It localises to the plastid. The protein resides in the chloroplast. In terms of biological role, one of the primary rRNA binding proteins, it binds directly to 16S rRNA where it nucleates assembly of the body of the 30S subunit. Functionally, with S5 and S12 plays an important role in translational accuracy. This is Small ribosomal subunit protein uS4c (rps4) from Drimys granadensis.